A 359-amino-acid chain; its full sequence is UDP-3-O-acylglucosamine N-acyltransferase (359 aa).

The active-site Proton acceptor is the His248.

It belongs to the transferase hexapeptide repeat family. LpxD subfamily. Homotrimer.

The catalysed reaction is a UDP-3-O-[(3R)-3-hydroxyacyl]-alpha-D-glucosamine + a (3R)-hydroxyacyl-[ACP] = a UDP-2-N,3-O-bis[(3R)-3-hydroxyacyl]-alpha-D-glucosamine + holo-[ACP] + H(+). The protein operates within bacterial outer membrane biogenesis; LPS lipid A biosynthesis. In terms of biological role, catalyzes the N-acylation of UDP-3-O-acylglucosamine using 3-hydroxyacyl-ACP as the acyl donor. Is involved in the biosynthesis of lipid A, a phosphorylated glycolipid that anchors the lipopolysaccharide to the outer membrane of the cell. The chain is UDP-3-O-acylglucosamine N-acyltransferase from Chlamydia abortus (strain DSM 27085 / S26/3) (Chlamydophila abortus).